A 310-amino-acid chain; its full sequence is 26S proteasome non-ATPase regulatory subunit 7 homolog B (310 aa).

Position 1 is an N-acetylmethionine (methionine 1). The 138-residue stretch at 17–154 (VIVHPLVLLS…YYAVEEVKEN (138 aa)) folds into the MPN domain.

It belongs to the peptidase M67A family. Component of the 19S regulatory particle (RP/PA700) lid subcomplex of the 26S proteasome. The 26S proteasome is composed of a core protease (CP), known as the 20S proteasome, capped at one or both ends by the 19S regulatory particle (RP/PA700). The RP/PA700 complex is composed of at least 17 different subunits in two subcomplexes, the base and the lid, which form the portions proximal and distal to the 20S proteolytic core, respectively.

Its function is as follows. Acts as a regulatory subunit of the 26S proteasome which is involved in the ATP-dependent degradation of ubiquitinated proteins. The polypeptide is 26S proteasome non-ATPase regulatory subunit 7 homolog B (RPN8B) (Arabidopsis thaliana (Mouse-ear cress)).